Here is a 597-residue protein sequence, read N- to C-terminus: Elongation factor 4 (597 aa).

The 183-residue stretch at 2 to 184 (DHIRNFSIIA…SLIAKVPPPK (183 aa)) folds into the tr-type G domain. GTP-binding positions include 14-19 (DHGKST) and 131-134 (NKID).

It belongs to the TRAFAC class translation factor GTPase superfamily. Classic translation factor GTPase family. LepA subfamily.

It is found in the cell inner membrane. It carries out the reaction GTP + H2O = GDP + phosphate + H(+). Its function is as follows. Required for accurate and efficient protein synthesis under certain stress conditions. May act as a fidelity factor of the translation reaction, by catalyzing a one-codon backward translocation of tRNAs on improperly translocated ribosomes. Back-translocation proceeds from a post-translocation (POST) complex to a pre-translocation (PRE) complex, thus giving elongation factor G a second chance to translocate the tRNAs correctly. Binds to ribosomes in a GTP-dependent manner. This is Elongation factor 4 from Burkholderia cenocepacia (strain HI2424).